Consider the following 166-residue polypeptide: Small ribosomal subunit protein cS23z (166 aa).

Belongs to the chloroplast-specific ribosomal protein cS23 family. In terms of assembly, part of the 30S ribosomal subunit.

The protein resides in the plastid. The protein localises to the chloroplast. Component of the chloroplast ribosome (chloro-ribosome), a dedicated translation machinery responsible for the synthesis of chloroplast genome-encoded proteins, including proteins of the transcription and translation machinery and components of the photosynthetic apparatus. The protein is Small ribosomal subunit protein cS23z of Arabidopsis thaliana (Mouse-ear cress).